Reading from the N-terminus, the 163-residue chain is Protein-export protein SecB (163 aa).

It belongs to the SecB family. As to quaternary structure, homotetramer, a dimer of dimers. One homotetramer interacts with 1 SecA dimer.

Its subcellular location is the cytoplasm. Functionally, one of the proteins required for the normal export of preproteins out of the cell cytoplasm. It is a molecular chaperone that binds to a subset of precursor proteins, maintaining them in a translocation-competent state. It also specifically binds to its receptor SecA. This is Protein-export protein SecB from Burkholderia ambifaria (strain MC40-6).